Consider the following 252-residue polypeptide: Adenosylcobinamide-GDP ribazoletransferase (252 aa).

The next 5 helical transmembrane spans lie at 33-53 (FISP…VVLL), 105-125 (TGSG…IATL), 132-152 (LWFF…LLGL), 184-204 (FAIL…LLVF), and 215-235 (MSGD…LLVA).

It belongs to the CobS family. The cofactor is Mg(2+).

The protein localises to the cell membrane. The catalysed reaction is alpha-ribazole + adenosylcob(III)inamide-GDP = adenosylcob(III)alamin + GMP + H(+). It carries out the reaction alpha-ribazole 5'-phosphate + adenosylcob(III)inamide-GDP = adenosylcob(III)alamin 5'-phosphate + GMP + H(+). The protein operates within cofactor biosynthesis; adenosylcobalamin biosynthesis; adenosylcobalamin from cob(II)yrinate a,c-diamide: step 7/7. Its function is as follows. Joins adenosylcobinamide-GDP and alpha-ribazole to generate adenosylcobalamin (Ado-cobalamin). Also synthesizes adenosylcobalamin 5'-phosphate from adenosylcobinamide-GDP and alpha-ribazole 5'-phosphate. The polypeptide is Adenosylcobinamide-GDP ribazoletransferase (Sulfolobus acidocaldarius (strain ATCC 33909 / DSM 639 / JCM 8929 / NBRC 15157 / NCIMB 11770)).